The sequence spans 753 residues: Enhancer of polycomb-like protein 1 (753 aa).

2 disordered regions span residues 1-75 and 429-490; these read MAAA…RDLH and VRTE…LPPA. Positions 46 to 71 are enriched in polar residues; the sequence is LDSNELEPSQVHHLNSNASSSSTQQP. The segment covering 429–449 has biased composition (basic and acidic residues); it reads VRTEDEEREKKREKKKQDQEL. Over residues 450–463 the composition is skewed to low complexity; it reads ALKQQQALQQQQQQ.

Belongs to the enhancer of polycomb family. In terms of assembly, component of the NuA4 histone acetyltransferase complex.

It localises to the nucleus. In terms of biological role, component of the NuA4 histone acetyltransferase complex which is involved in transcriptional activation of selected genes principally by acetylation of nucleosomal histone H4 and H2A. The NuA4 complex is also involved in DNA repair. Involved in gene silencing by neighboring heterochromatin, blockage of the silencing spreading along the chromosome, and required for cell cycle progression through G2/M. This Candida albicans (strain SC5314 / ATCC MYA-2876) (Yeast) protein is Enhancer of polycomb-like protein 1 (EPL1).